Reading from the N-terminus, the 177-residue chain is Basic form of pathogenesis-related protein 1 (177 aa).

The N-terminal stretch at 1–23 (MGFLTTIVACFITFAILIHSSKA) is a signal peptide. Q24 bears the Pyrrolidone carboxylic acid mark. The SCP domain occupies 31–147 (LNPHNAARRQ…NGWFFITCNY (117 aa)).

It belongs to the CRISP family. Two disulfide bonds are present.

Its function is as follows. Probably involved in the defense reaction of plants against pathogens. The protein is Basic form of pathogenesis-related protein 1 of Nicotiana tabacum (Common tobacco).